The chain runs to 1772 residues: Putative stereocilin-like protein (1772 aa).

The first 25 residues, 1 to 25 (MALSLWPLLLLLLLLLLLSFAVTLA), serve as a signal peptide directing secretion. Residues Asn65, Asn427, Asn476, and Asn565 are each glycosylated (N-linked (GlcNAc...) asparagine).

This sequence belongs to the stereocilin family.

Its subcellular location is the secreted. This chain is Putative stereocilin-like protein (STRCP1), found in Homo sapiens (Human).